A 537-amino-acid chain; its full sequence is ATP synthase subunit beta 1 (537 aa).

Gly164–Thr171 contributes to the ATP binding site. Positions Pro471–Arg537 are disordered. Polar residues-rich tracts occupy residues Gln473–Pro498 and Ile507–Glu528.

The protein belongs to the ATPase alpha/beta chains family. F-type ATPases have 2 components, CF(1) - the catalytic core - and CF(0) - the membrane proton channel. CF(1) has five subunits: alpha(3), beta(3), gamma(1), delta(1), epsilon(1). CF(0) has three main subunits: a(1), b(2) and c(9-12). The alpha and beta chains form an alternating ring which encloses part of the gamma chain. CF(1) is attached to CF(0) by a central stalk formed by the gamma and epsilon chains, while a peripheral stalk is formed by the delta and b chains.

The protein resides in the cell inner membrane. The catalysed reaction is ATP + H2O + 4 H(+)(in) = ADP + phosphate + 5 H(+)(out). Produces ATP from ADP in the presence of a proton gradient across the membrane. The catalytic sites are hosted primarily by the beta subunits. The protein is ATP synthase subunit beta 1 of Pseudoalteromonas atlantica (strain T6c / ATCC BAA-1087).